Here is a 202-residue protein sequence, read N- to C-terminus: Small ribosomal subunit protein uS4 (202 aa).

Residues 93–156 (RRLDNMVYRL…KDLKIISEAV (64 aa)) enclose the S4 RNA-binding domain.

It belongs to the universal ribosomal protein uS4 family. In terms of assembly, part of the 30S ribosomal subunit. Contacts protein S5. The interaction surface between S4 and S5 is involved in control of translational fidelity.

Functionally, one of the primary rRNA binding proteins, it binds directly to 16S rRNA where it nucleates assembly of the body of the 30S subunit. With S5 and S12 plays an important role in translational accuracy. The sequence is that of Small ribosomal subunit protein uS4 from Pediococcus pentosaceus (strain ATCC 25745 / CCUG 21536 / LMG 10740 / 183-1w).